Reading from the N-terminus, the 60-residue chain is Myrmicitoxin(1)-Pr4b (60 aa).

The N-terminal stretch at 1–23 (MKAIIFLFAVLTVVAIIIPIISG) is a signal peptide. A propeptide spanning residues 24–33 (EPNAGPHAAS) is cleaved from the precursor. A Glutamine amide modification is found at Q59.

It belongs to the formicidae venom clade 2 family. As to expression, expressed by the venom gland.

Its subcellular location is the secreted. Its function is as follows. Toxin that causes a rapid and irreversible paralysis when intrathoracically injected into insects (blowflies). Does not cause spontaneous nocifensive behaviors by intraplantar injection in mice. The sequence is that of Myrmicitoxin(1)-Pr4b from Pogonomyrmex rugosus (Desert harvester ant).